Consider the following 187-residue polypeptide: Phosphatidylethanolamine-binding protein 1 (187 aa).

Ala-2 carries the N-acetylalanine; in peptide hippocampal cholinergic neurostimulating modification. Ser-6 carries the post-translational modification Phosphoserine. Thr-42 carries the phosphothreonine modification. Ser-51, Ser-52, Ser-54, Ser-98, and Ser-132 each carry phosphoserine. Residues 93–134 (KGNDISSGTVLSDYVGSGPPSGTGLHRYVWLVYEQEQPLSCD) form an interaction with RAF1 region.

It belongs to the phosphatidylethanolamine-binding protein family. As to quaternary structure, has a tendency to form dimers by disulfide cross-linking. Interacts with RAF1 and this interaction is enhanced if RAF1 is phosphorylated on residues 'Ser-338', 'Ser-339', 'Tyr-340' and 'Tyr-341'. Interacts with ALOX15; in response to IL13/interleukin-13, prevents the interaction of PEBP1 with RAF1 to activate the ERK signaling cascade. As to expression, HCNP is expressed in brain. Increased expression in aged senescence-accelerated mice.

Its subcellular location is the cytoplasm. Binds ATP, opioids and phosphatidylethanolamine. Has lower affinity for phosphatidylinositol and phosphatidylcholine. Serine protease inhibitor which inhibits thrombin, neuropsin and chymotrypsin but not trypsin, tissue type plasminogen activator and elastase. Inhibits the kinase activity of RAF1 by inhibiting its activation and by dissociating the RAF1/MEK complex and acting as a competitive inhibitor of MEK phosphorylation. In terms of biological role, HCNP may be involved in the function of the presynaptic cholinergic neurons of the central nervous system. HCNP increases the production of choline acetyltransferase but not acetylcholinesterase. Seems to be mediated by a specific receptor. The sequence is that of Phosphatidylethanolamine-binding protein 1 (Pebp1) from Mus musculus (Mouse).